The chain runs to 1818 residues: Protein encore (1818 aa).

Disordered regions lie at residues A47 to G68, S123 to N282, and A317 to S413. The span at V52–V66 shows a compositional bias: gly residues. Polar residues predominate over residues A124–G137. A compositionally biased stretch (basic residues) spans G141 to H152. Low complexity-rich tracts occupy residues E156–G179, N186–A199, Q217–V233, and N266–N282. Phosphoserine occurs at positions 267 and 270. The span at A317–M328 shows a compositional bias: basic and acidic residues. S336 bears the Phosphoserine mark. A compositionally biased stretch (basic and acidic residues) spans N338–P348. Composition is skewed to low complexity over residues N372–I381 and N391–G410. The 65-residue stretch at R444–N508 folds into the R3H domain. One can recognise an SUZ domain in the interval R510–G576. Residue S535 is modified to Phosphoserine. Basic and acidic residues predominate over residues F557–R568. Disordered regions lie at residues F557–Q806, Q885–P916, P936–K959, G1176–S1249, A1332–H1648, and G1684–I1709. Residues Y592–Q606 are compositionally biased toward low complexity. Residues N644 to G655 show a composition bias toward gly residues. The segment covering Q678–S695 has biased composition (polar residues). The segment covering S713–Q771 has biased composition (low complexity). Polar residues predominate over residues Y772–S784. The span at A893 to S904 shows a compositional bias: low complexity. A compositionally biased stretch (low complexity) spans G1176–T1197. Residues S1220–Y1231 are compositionally biased toward polar residues. Residues A1381–P1392 are compositionally biased toward low complexity. The segment covering T1430–Y1443 has biased composition (polar residues). The segment covering A1503–S1521 has biased composition (low complexity). Polar residues-rich tracts occupy residues A1554–E1565 and F1579–R1596. The segment covering S1608 to A1633 has biased composition (low complexity). Positions G1684–A1705 are enriched in gly residues.

In terms of assembly, interacts with hfp; however, given the nuclear localization of hfp, the relevance of such interaction is unclear. Interacts with CycE, Cul1, and the SCF-proteasome complex. As to expression, expressed in all germline cells of the germarium including the stem cells and dividing cystocytes.

It localises to the cytoplasm. Functionally, required for the regulation of germline mitosis, karyosome formation, and establishment of dorsoventral (DS) polarity of the egg and embryo. Involved in proper grk mRNA localization and translation in the oocyte. May control germline mitosis by facilitating the cyclin E (CycE) proteolysis by the SCF-ubiquitin-proteasome complex. This is Protein encore (enc) from Drosophila melanogaster (Fruit fly).